The chain runs to 105 residues: Small ribosomal subunit protein uS10 (105 aa).

It belongs to the universal ribosomal protein uS10 family. In terms of assembly, part of the 30S ribosomal subunit.

Its function is as follows. Involved in the binding of tRNA to the ribosomes. The polypeptide is Small ribosomal subunit protein uS10 (Acaryochloris marina (strain MBIC 11017)).